Here is a 202-residue protein sequence, read N- to C-terminus: Small ribosomal subunit protein uS4c (202 aa).

In terms of domain architecture, S4 RNA-binding spans 90–153; it reads MRLDNVTFRL…KSETIISKNI (64 aa).

Belongs to the universal ribosomal protein uS4 family. In terms of assembly, part of the 30S ribosomal subunit. Contacts protein S5. The interaction surface between S4 and S5 is involved in control of translational fidelity.

It localises to the plastid. The protein localises to the chloroplast. Its function is as follows. One of the primary rRNA binding proteins, it binds directly to 16S rRNA where it nucleates assembly of the body of the 30S subunit. Functionally, with S5 and S12 plays an important role in translational accuracy. This chain is Small ribosomal subunit protein uS4c (rps4), found in Hypnum cupressiforme (Cypress-leaved plait-moss).